We begin with the raw amino-acid sequence, 166 residues long: Large ribosomal subunit protein uL10 (166 aa).

Belongs to the universal ribosomal protein uL10 family. In terms of assembly, part of the ribosomal stalk of the 50S ribosomal subunit. The N-terminus interacts with L11 and the large rRNA to form the base of the stalk. The C-terminus forms an elongated spine to which L12 dimers bind in a sequential fashion forming a multimeric L10(L12)X complex.

Its function is as follows. Forms part of the ribosomal stalk, playing a central role in the interaction of the ribosome with GTP-bound translation factors. This chain is Large ribosomal subunit protein uL10, found in Pelagibacter ubique (strain HTCC1062).